Consider the following 327-residue polypeptide: GMP reductase (327 aa).

Cys175 functions as the Thioimidate intermediate in the catalytic mechanism. Residue 204–227 (IIADGGIRTHGDVAKSIRFGATMV) coordinates NADP(+).

This sequence belongs to the IMPDH/GMPR family. GuaC type 2 subfamily.

It carries out the reaction IMP + NH4(+) + NADP(+) = GMP + NADPH + 2 H(+). Functionally, catalyzes the irreversible NADPH-dependent deamination of GMP to IMP. It functions in the conversion of nucleobase, nucleoside and nucleotide derivatives of G to A nucleotides, and in maintaining the intracellular balance of A and G nucleotides. This is GMP reductase from Bacillus cereus (strain ATCC 10987 / NRS 248).